The chain runs to 714 residues: Nuclear protein MDM1 (714 aa).

The ST]-E-Y-X(3)-F motif 1; required for efficient microtubule binding and stabilization motif lies at 9–15 (SEYQRNF). The segment at 79 to 152 (NVVASPEPEA…HTPVNENVEL (74 aa)) is disordered. Residue serine 83 is modified to Phosphoserine. The segment covering 93-111 (KSQEAEQKDVTQERVHSLE) has biased composition (basic and acidic residues). A phosphoserine mark is found at serine 123 and serine 126. Polar residues predominate over residues 138-147 (EGVTNHTPVN). The ST]-E-Y-X(3)-F motif 2; required for efficient microtubule binding and stabilization signature appears at 189 to 195 (SEYQRQF). The ST]-E-Y-X(3)-F motif 3; required for efficient microtubule binding and stabilization motif lies at 232-238 (TEYKRNF). 2 positions are modified to phosphoserine: serine 242 and serine 263. An ST]-E-Y-X(3)-F motif 4; required for efficient microtubule binding and stabilization motif is present at residues 306–312 (SEYRAKF). Serine 314 is subject to Phosphoserine. The tract at residues 391–571 (DLAGDPTSHK…DCLETSKNDF (181 aa)) is disordered. Positions 460 to 469 (KEEEDDNEEE) are enriched in acidic residues. Positions 482 to 501 (EQEKLDVREKSKADKMKEGS) are enriched in basic and acidic residues. Residues serine 560 and serine 584 each carry the phosphoserine modification. The segment at 616–637 (SKIPKYPTNPPGQLPSPPHVPS) is disordered. The span at 622-635 (PTNPPGQLPSPPHV) shows a compositional bias: pro residues. Serine 648 is subject to Phosphoserine.

This sequence belongs to the MDM1 family.

It is found in the nucleus. It localises to the cytoplasm. The protein localises to the cytoskeleton. The protein resides in the microtubule organizing center. Its subcellular location is the centrosome. It is found in the centriole. Microtubule-binding protein that negatively regulates centriole duplication. Binds to and stabilizes microtubules. The chain is Nuclear protein MDM1 (MDM1) from Homo sapiens (Human).